The primary structure comprises 355 residues: Peptide chain release factor 1 (355 aa).

Gln-232 carries the post-translational modification N5-methylglutamine.

This sequence belongs to the prokaryotic/mitochondrial release factor family. In terms of processing, methylated by PrmC. Methylation increases the termination efficiency of RF1.

Its subcellular location is the cytoplasm. Functionally, peptide chain release factor 1 directs the termination of translation in response to the peptide chain termination codons UAG and UAA. The sequence is that of Peptide chain release factor 1 from Kineococcus radiotolerans (strain ATCC BAA-149 / DSM 14245 / SRS30216).